The sequence spans 233 residues: Protein YIPF6 (233 aa).

At 1 to 84 (MAETEGFGDS…PKKSTTLLRD (84 aa)) the chain is on the cytoplasmic side. A helical transmembrane segment spans residues 85 to 105 (WDLWGPLVLCVSLALMLQGGN). The Lumenal portion of the chain corresponds to 106–111 (ADSKDD). Residues 112–132 (GGPQFAEVFVIIWFGAVVITL) traverse the membrane as a helical segment. At 133 to 142 (NSKLLGGTIS) the chain is on the cytoplasmic side. A helical membrane pass occupies residues 143–163 (FFQSLCVLGYCILPLTVAMLV). Over 164–180 (CRLVLLLSHTTASFIVR) the chain is Lumenal. The chain crosses the membrane as a helical span at residues 181–201 (LVVVTVMFAWSTFASTAFLAD). The Cytoplasmic segment spans residues 202–208 (SQPPNRR). The chain crosses the membrane as a helical span at residues 209-229 (ALAVYPIFLFYFVISWMVLTF). Residues 230–233 (NTVS) are Lumenal-facing.

It belongs to the YIP1 family.

It localises to the golgi apparatus membrane. This is Protein YIPF6 (yipf6) from Xenopus tropicalis (Western clawed frog).